Consider the following 1233-residue polypeptide: uncharacterized protein (1233 aa).

Disordered stretches follow at residues 32–51 (SETS…TPKP), 510–529 (ATTN…PVPD), and 882–915 (EVIE…IERS). Acidic residues-rich tracts occupy residues 513 to 529 (NEEE…PVPD) and 882 to 905 (EVIE…EDEG). Basic and acidic residues predominate over residues 906 to 915 (DNKQRVIERS).

This is an uncharacterized protein from Dictyostelium discoideum (Social amoeba).